Consider the following 111-residue polypeptide: Beta-microseminoprotein (111 aa).

An N-terminal signal peptide occupies residues 1–20; it reads MKFLLGTLVVLATFVTLCNS. At glutamine 21 the chain carries Pyrrolidone carboxylic acid. 5 disulfide bridges follow: cysteine 22–cysteine 67, cysteine 35–cysteine 59, cysteine 54–cysteine 90, cysteine 57–cysteine 66, and cysteine 81–cysteine 104.

It belongs to the beta-microseminoprotein family. Homodimer; Interacts with PI16. Corpora lutea, mostly in the luteal cells surrounding blood vessels.

The protein localises to the secreted. The polypeptide is Beta-microseminoprotein (MSMB) (Sus scrofa (Pig)).